Consider the following 567-residue polypeptide: Platelet glycoprotein V (567 aa).

The N-terminal stretch at 1–16 (MLRSALLSAVLPLLRA) is a signal peptide. Residues 17–50 (QPFPCPKTCKCVVRDAAQCSGGSVAHIAELGLPT) enclose the LRRNT domain. Residues 17–522 (QPFPCPKTCK…ESPNNRLYWG (506 aa)) are Extracellular-facing. N-linked (GlcNAc...) asparagine glycosylation is found at Asn-51 and Asn-67. LRR repeat units lie at residues 75–96 (VLQRQMLSDSHISAIDPGTFND), 99–120 (KLKTLRLTRNKISRLPRAILDK), 123–144 (LLEQLFLDHNALRDLDQNLFQQ), 147–168 (NLQELGLNQNQLSFLPANLFSS), 171–193 (ELKLLDLSRNNLTHLPKGLLGAQ), 195–216 (KLEKLLLYSNQLTSVDSGLLSN), 219–240 (ALTELRLERNHLRSVAPGAFDR), 243–264 (NLSSLTLSGNLLESLPPALFLH), 267–288 (SVSRLTLFENPLEELPDVLFGE), 291–312 (GLRELWLNGTHLSTLPAAAFRN), 315–337 (GLQTLGLTRNPRLSALPRGVFQG), 340–361 (ELRVLGLHTNALAELRDDALRG), 364–385 (HLRQVSLRHNRLRALPRTLFRN), and 388–409 (SLESVQLEHNQLETLPGDVFAA). The N-linked (GlcNAc...) asparagine glycan is linked to Asn-181. N-linked (GlcNAc...) asparagine glycosylation is present at Asn-243. Residues Asn-298 and Asn-312 are each glycosylated (N-linked (GlcNAc...) asparagine). The N-linked (GlcNAc...) asparagine glycan is linked to Asn-385. Positions 421-474 (NPWLCDCGLWRFLQWLRHHPDILGRDEPPQCRGPEPRASLSFWELLQGDPWCPD) constitute an LRRCT domain. The helical transmembrane segment at 523–543 (LYILLLVAQAIIAAFIVFAMI) threads the bilayer. Residues 544–567 (KIGQLFRTLIREKLLLEAMGKSCN) lie on the Cytoplasmic side of the membrane.

The protein localises to the membrane. Functionally, the GPIb-V-IX complex functions as the vWF receptor and mediates vWF-dependent platelet adhesion to blood vessels. The adhesion of platelets to injured vascular surfaces in the arterial circulation is a critical initiating event in hemostasis. This is Platelet glycoprotein V (Gp5) from Mus musculus (Mouse).